The primary structure comprises 467 residues: Probable protein phosphatase 2C 55 (467 aa).

The 237-residue stretch at 222 to 458 (SCYLPHPDKE…DDITVVVSYV (237 aa)) folds into the PPM-type phosphatase domain. Residues Asp-252, Gly-253, Asp-383, and Asp-449 each contribute to the Mn(2+) site.

This sequence belongs to the PP2C family. The cofactor is Mg(2+). Mn(2+) serves as cofactor.

The enzyme catalyses O-phospho-L-seryl-[protein] + H2O = L-seryl-[protein] + phosphate. It catalyses the reaction O-phospho-L-threonyl-[protein] + H2O = L-threonyl-[protein] + phosphate. The protein is Probable protein phosphatase 2C 55 of Arabidopsis thaliana (Mouse-ear cress).